We begin with the raw amino-acid sequence, 140 residues long: ATP synthase epsilon chain (140 aa).

The protein belongs to the ATPase epsilon chain family. As to quaternary structure, F-type ATPases have 2 components, CF(1) - the catalytic core - and CF(0) - the membrane proton channel. CF(1) has five subunits: alpha(3), beta(3), gamma(1), delta(1), epsilon(1). CF(0) has three main subunits: a, b and c.

It is found in the cell inner membrane. Its function is as follows. Produces ATP from ADP in the presence of a proton gradient across the membrane. This is ATP synthase epsilon chain from Thermodesulfovibrio yellowstonii (strain ATCC 51303 / DSM 11347 / YP87).